The sequence spans 490 residues: Probable cytosol aminopeptidase (490 aa).

Mn(2+) is bound by residues K262 and D267. K274 is a catalytic residue. Residues D285, D344, and E346 each contribute to the Mn(2+) site. The active site involves R348.

It belongs to the peptidase M17 family. Mn(2+) is required as a cofactor.

The protein resides in the cytoplasm. The catalysed reaction is Release of an N-terminal amino acid, Xaa-|-Yaa-, in which Xaa is preferably Leu, but may be other amino acids including Pro although not Arg or Lys, and Yaa may be Pro. Amino acid amides and methyl esters are also readily hydrolyzed, but rates on arylamides are exceedingly low.. It carries out the reaction Release of an N-terminal amino acid, preferentially leucine, but not glutamic or aspartic acids.. Functionally, presumably involved in the processing and regular turnover of intracellular proteins. Catalyzes the removal of unsubstituted N-terminal amino acids from various peptides. The chain is Probable cytosol aminopeptidase from Xanthomonas oryzae pv. oryzae (strain MAFF 311018).